We begin with the raw amino-acid sequence, 179 residues long: ATP synthase subunit delta (179 aa).

This sequence belongs to the ATPase delta chain family. As to quaternary structure, F-type ATPases have 2 components, F(1) - the catalytic core - and F(0) - the membrane proton channel. F(1) has five subunits: alpha(3), beta(3), gamma(1), delta(1), epsilon(1). F(0) has three main subunits: a(1), b(2) and c(10-14). The alpha and beta chains form an alternating ring which encloses part of the gamma chain. F(1) is attached to F(0) by a central stalk formed by the gamma and epsilon chains, while a peripheral stalk is formed by the delta and b chains.

The protein resides in the cell inner membrane. F(1)F(0) ATP synthase produces ATP from ADP in the presence of a proton or sodium gradient. F-type ATPases consist of two structural domains, F(1) containing the extramembraneous catalytic core and F(0) containing the membrane proton channel, linked together by a central stalk and a peripheral stalk. During catalysis, ATP synthesis in the catalytic domain of F(1) is coupled via a rotary mechanism of the central stalk subunits to proton translocation. Its function is as follows. This protein is part of the stalk that links CF(0) to CF(1). It either transmits conformational changes from CF(0) to CF(1) or is implicated in proton conduction. The protein is ATP synthase subunit delta of Chlorobium chlorochromatii (strain CaD3).